The chain runs to 90 residues: Mucin-like protein 1 (90 aa).

The N-terminal stretch at Met-1 to Gln-20 is a signal peptide. O-linked (GalNAc...) threonine glycans are attached at residues Thr-23, Thr-24, Thr-30, Thr-34, Thr-46, Thr-47, Thr-51, Thr-52, Thr-54, Thr-55, Thr-59, Thr-60, Thr-62, and Thr-63. Composition is skewed to low complexity over residues Ala-25–Pro-36 and Ala-44–Thr-68. The segment at Ala-25–Thr-68 is disordered. A run of 3 repeats spans residues Thr-46–Ala-53, Thr-54–Ala-61, and Thr-62–Ala-69. The segment at Thr-46 to Ala-69 is 3 X 8 AA tandem repeat of T-T-A-A-[APS]-T-T-A. O-linked (GalNAc...) serine glycosylation occurs at Ser-66. 2 O-linked (GalNAc...) threonine glycosylation sites follow: Thr-67 and Thr-68.

In terms of processing, O-glycosylated. As to expression, expressed in mammary, salivary glands and prostate. Also detected in lung. Mainly expressed in cancer cell lines of breast origin. Highly expressed in lymph node-positive compared with node-negative tumors. Detected in all lymph node containing metastatic cells.

The protein resides in the secreted. It is found in the membrane. In terms of biological role, may play a role as marker for the diagnosis of metastatic breast cancer. The sequence is that of Mucin-like protein 1 (MUCL1) from Homo sapiens (Human).